We begin with the raw amino-acid sequence, 101 residues long: Large ribosomal subunit protein uL24 (101 aa).

Belongs to the universal ribosomal protein uL24 family. As to quaternary structure, part of the 50S ribosomal subunit.

Functionally, one of two assembly initiator proteins, it binds directly to the 5'-end of the 23S rRNA, where it nucleates assembly of the 50S subunit. In terms of biological role, one of the proteins that surrounds the polypeptide exit tunnel on the outside of the subunit. The polypeptide is Large ribosomal subunit protein uL24 (Streptococcus equi subsp. zooepidemicus (strain H70)).